The following is a 794-amino-acid chain: MSLLLSNSVLVGPKFRSSRISHASASLDIGLQRATSPQNASVPTCFEETKGRIAKLFHKNELSVSTYDTAWVAMVPSPTSSEEPCFPACLNWLLENQCHDGSWARPHHHHMLKKDVLSSTLACILALKKWGVGEEQINRGLHFVELNFASATEKGQITPMGFDIIFPAMLDNARGLSLNLQLEPTMLNDLIYKRDLELKRCNQSNSAEKEVYWAHIAEGMGKLHDWESVMKYQRKNGSLFNCPSTTAAAFTALRNSDCLNYLCLALEKFGSAVPAVYPLDIYSQLCTVGNLERLGISRYFLTEIQSVLDETYRSWLQGDEEIFMDASTCALAFRTLRMNGYNVTSDPITKILQECFSSSFRGNMTDNNTTLEIYRASELILYPEERDLVQHNLRLKTFLEQELSSNGFIQSCQLGRNINAEVNQAIEYPFYAIMDRMAKRKNIENYNIDNTRILKTSYRSPNFGNKDFLSLSVEDFNRCQVIHREELRELERWVIENRLDELKFARSKAAYCYFSAAATIFSPELSDARMSWAKNGVLTTVVDDFFDVGGSVEELKNLIQLVELWDVDVSTQCCSPNVQIIFSALKHTICEIADKGFKLQGRSITDHIISIWLDLLYSMMKETELGIDKSFPTMDEYMSNAYVSFALGPIVLPALYLVGPKLSEEMVNHSEYHTLFKLMSTCGRLLNDIRGYERELKDGKISAVSLYIMNNGGEITTEAAISEMRSWIERDRRELLRLVLEENKSVLPKACKKLFWHMCTVVHVFYSKDDGFTSLNLHGVVNAIINEPIVLNQF.

Residues 1–28 constitute a chloroplast transit peptide; it reads MSLLLSNSVLVGPKFRSSRISHASASLD. Mg(2+) is bound by residues Asp543, Asp547, Asn687, and Glu695. A DDXXD motif motif is present at residues 543–547; the sequence is DDFFD.

It belongs to the terpene synthase family. Requires Mg(2+) as cofactor. In terms of tissue distribution, accumulates in leaves, and, at low levels, in germinating seeds.

It is found in the plastid. The protein resides in the chloroplast. It catalyses the reaction ent-copalyl diphosphate = ent-kaur-16-ene + diphosphate. It functions in the pathway secondary metabolite biosynthesis; terpenoid biosynthesis. Its pathway is plant hormone biosynthesis; gibberellin biosynthesis. Involved in the biosynthesis of ent-kaurene diterpenoids natural products such as oridonin, miltiradiene, eriocalyxin B and nezukol, known to exhibit antitumor, anti-inflammatory and antibacterial activities, and in the production of gibberellins phytohormones. Catalyzes the conversion of ent-copalyl diphosphate (ent-CPP) to ent-kaurene. In Isodon eriocalyx (Plectranthus eriocalyx), this protein is Ent-kaurene synthase 1, chloroplastic.